The primary structure comprises 192 residues: Ribosomal RNA large subunit methyltransferase E (192 aa).

G48, F50, D67, D85, and D107 together coordinate S-adenosyl-L-methionine. The active-site Proton acceptor is the K147.

This sequence belongs to the class I-like SAM-binding methyltransferase superfamily. RNA methyltransferase RlmE family.

The protein localises to the cytoplasm. It catalyses the reaction uridine(2552) in 23S rRNA + S-adenosyl-L-methionine = 2'-O-methyluridine(2552) in 23S rRNA + S-adenosyl-L-homocysteine + H(+). Functionally, specifically methylates the uridine in position 2552 of 23S rRNA at the 2'-O position of the ribose in the fully assembled 50S ribosomal subunit. This Borrelia garinii subsp. bavariensis (strain ATCC BAA-2496 / DSM 23469 / PBi) (Borreliella bavariensis) protein is Ribosomal RNA large subunit methyltransferase E.